Consider the following 366-residue polypeptide: Chorismate synthase (366 aa).

NADP(+) is bound by residues Arg48 and Arg54. Residues 125-127, 238-239, Gly278, 293-297, and Arg319 each bind FMN; these read RSS, NA, and KPTSS.

The protein belongs to the chorismate synthase family. In terms of assembly, homotetramer. FMNH2 serves as cofactor.

The enzyme catalyses 5-O-(1-carboxyvinyl)-3-phosphoshikimate = chorismate + phosphate. Its pathway is metabolic intermediate biosynthesis; chorismate biosynthesis; chorismate from D-erythrose 4-phosphate and phosphoenolpyruvate: step 7/7. Its function is as follows. Catalyzes the anti-1,4-elimination of the C-3 phosphate and the C-6 proR hydrogen from 5-enolpyruvylshikimate-3-phosphate (EPSP) to yield chorismate, which is the branch point compound that serves as the starting substrate for the three terminal pathways of aromatic amino acid biosynthesis. This reaction introduces a second double bond into the aromatic ring system. In Burkholderia multivorans (strain ATCC 17616 / 249), this protein is Chorismate synthase.